The chain runs to 328 residues: DNA-directed RNA polymerase subunit alpha (328 aa).

An alpha N-terminal domain (alpha-NTD) region spans residues 1–232 (MSTQGFLKPR…DQISVFAALE (232 aa)). Residues 248–328 (IDPVLLRPVD…NWPPLGLERP (81 aa)) form an alpha C-terminal domain (alpha-CTD) region.

The protein belongs to the RNA polymerase alpha chain family. Homodimer. The RNAP catalytic core consists of 2 alpha, 1 beta, 1 beta' and 1 omega subunit. When a sigma factor is associated with the core the holoenzyme is formed, which can initiate transcription.

It catalyses the reaction RNA(n) + a ribonucleoside 5'-triphosphate = RNA(n+1) + diphosphate. DNA-dependent RNA polymerase catalyzes the transcription of DNA into RNA using the four ribonucleoside triphosphates as substrates. The sequence is that of DNA-directed RNA polymerase subunit alpha from Bordetella petrii (strain ATCC BAA-461 / DSM 12804 / CCUG 43448).